The primary structure comprises 284 residues: L-fucose dehydrogenase (284 aa).

NAD(+) is bound by residues Arg-19, Ile-21, Asp-40, Lys-41, Asp-62, Val-63, Asn-89, Tyr-154, Lys-158, Ile-187, Thr-189, and Leu-191.

It belongs to the short-chain dehydrogenases/reductases (SDR) family.

The enzyme catalyses L-fucose + NAD(+) = L-fucono-1,5-lactone + NADH + H(+). It catalyses the reaction D-arabinose + NAD(+) = D-arabinono-1,5-lactone + NADH + H(+). The catalysed reaction is L-galactose + NAD(+) = L-galactono-1,5-lactone + NADH + H(+). Its pathway is carbohydrate degradation; L-fucose degradation. Functionally, catalyzes the NAD(+)-dependent oxidation of L-fucose, yielding L-fucono-1,5-lactone, which rapidly converts spontaneously to L-fucone-1,4-lactone. Can also act on D-arabinose and L-galactose, with lower catalytic efficiency. Does not use NADPH. May be the initial enzyme of the putative L-fucose degradation pathway in mammals. This is L-fucose dehydrogenase (HSD17B14) from Oryctolagus cuniculus (Rabbit).